Consider the following 199-residue polypeptide: V-type ATP synthase subunit E (199 aa).

Belongs to the V-ATPase E subunit family.

Functionally, produces ATP from ADP in the presence of a proton gradient across the membrane. The polypeptide is V-type ATP synthase subunit E (Borrelia garinii subsp. bavariensis (strain ATCC BAA-2496 / DSM 23469 / PBi) (Borreliella bavariensis)).